The following is a 122-amino-acid chain: MIQPQTHLNVADNSGARELMCIQIIGASNRRYAHIGDIIVAVIKEAVPNMPLERSEVVRAVIVRTRKELKRDNGMIIRYDDNAAVVIDQEGNPKGTRIFGAIPRELRQFNFTKIVSLAPEVL.

Belongs to the universal ribosomal protein uL14 family. As to quaternary structure, part of the 50S ribosomal subunit.

The protein localises to the plastid. Functionally, binds to 23S rRNA. The protein is Large ribosomal subunit protein uL14c of Cuscuta reflexa (Southern Asian dodder).